Reading from the N-terminus, the 350-residue chain is Small ribosomal subunit biogenesis GTPase RsgA (350 aa).

The segment at 1-30 (MSKRKLTQNQQRRIQSNNAKTLHRHQHRHK) is disordered. A compositionally biased stretch (polar residues) spans 7–20 (TQNQQRRIQSNNAK). A compositionally biased stretch (basic residues) spans 21–30 (TLHRHQHRHK). One can recognise a CP-type G domain in the interval 106–274 (HNQIVRPDYY…LIDSPGIREF (169 aa)). GTP-binding positions include 162–165 (NKAD) and 216–224 (GQSGVGKSS). Residues Cys-298, Cys-303, His-305, and Cys-311 each contribute to the Zn(2+) site.

Belongs to the TRAFAC class YlqF/YawG GTPase family. RsgA subfamily. In terms of assembly, monomer. Associates with 30S ribosomal subunit, binds 16S rRNA. The cofactor is Zn(2+).

It localises to the cytoplasm. Its function is as follows. One of several proteins that assist in the late maturation steps of the functional core of the 30S ribosomal subunit. Helps release RbfA from mature subunits. May play a role in the assembly of ribosomal proteins into the subunit. Circularly permuted GTPase that catalyzes slow GTP hydrolysis, GTPase activity is stimulated by the 30S ribosomal subunit. This is Small ribosomal subunit biogenesis GTPase RsgA from Histophilus somni (strain 129Pt) (Haemophilus somnus).